The chain runs to 272 residues: Prephenate dehydratase (272 aa).

Positions 4-179 (AVIYTLPKGT…NKTRFILIGK (176 aa)) constitute a Prephenate dehydratase domain. Residues 194-269 (IVFELKEDKP…TFINLLGKYP (76 aa)) form the ACT domain.

As to quaternary structure, homodimer.

It carries out the reaction prephenate + H(+) = 3-phenylpyruvate + CO2 + H2O. It functions in the pathway amino-acid biosynthesis; L-phenylalanine biosynthesis; phenylpyruvate from prephenate: step 1/1. Its activity is regulated as follows. Inhibited by L-phenylalanine but not by L-tyrosine or L-tryptophan. The chain is Prephenate dehydratase (pheA) from Methanocaldococcus jannaschii (strain ATCC 43067 / DSM 2661 / JAL-1 / JCM 10045 / NBRC 100440) (Methanococcus jannaschii).